The following is a 370-amino-acid chain: Anhydro-N-acetylmuramic acid kinase (370 aa).

12 to 19 (GTSLDGVD) contacts ATP.

Belongs to the anhydro-N-acetylmuramic acid kinase family.

It carries out the reaction 1,6-anhydro-N-acetyl-beta-muramate + ATP + H2O = N-acetyl-D-muramate 6-phosphate + ADP + H(+). Its pathway is amino-sugar metabolism; 1,6-anhydro-N-acetylmuramate degradation. It participates in cell wall biogenesis; peptidoglycan recycling. Its function is as follows. Catalyzes the specific phosphorylation of 1,6-anhydro-N-acetylmuramic acid (anhMurNAc) with the simultaneous cleavage of the 1,6-anhydro ring, generating MurNAc-6-P. Is required for the utilization of anhMurNAc either imported from the medium or derived from its own cell wall murein, and thus plays a role in cell wall recycling. The protein is Anhydro-N-acetylmuramic acid kinase of Pectobacterium carotovorum subsp. carotovorum (strain PC1).